Consider the following 226-residue polypeptide: Probable functional amyloid protease FapD (226 aa).

The N-terminal stretch at 1 to 18 (MRRATLCLLLLLAGPSWA) is a signal peptide. Residues 50 to 180 (QKTDFSCGAA…AGWNGIVFAV (131 aa)) form the Peptidase C39 domain. Cysteine 56 is a catalytic residue.

The protein belongs to the FapD family.

It localises to the periplasm. Functionally, probable cysteine protease that is involved in processing fibril precursors. Upon overexpression of the endogenous six-gene locus (fapA-fapF) in situ, cells form large clumps during liquid growth, make large amounts of biofilm and produce amyloid fibrils. Expression of the 6 gene operon in E.coli strain BL21(DE3) induces flocculation and biofilm formation with copious extracellular fibrils. The sequence is that of Probable functional amyloid protease FapD from Pseudomonas fluorescens.